We begin with the raw amino-acid sequence, 420 residues long: Ammonium transporter Amt2 (420 aa).

Transmembrane regions (helical) follow at residues 34–54 (VFFLVVMGVLVFMMQWGFAML), 71–91 (NMVDWLIGCVAWLFIGGILCS), 120–140 (SWFFGLVFCATAATIVSGGVA), 149–169 (VLISLIITGLLYPLFVYLGPW), 180–200 (AGSLVVHGLGGFLALGAIAAL), 220–240 (IPMAVFGAFALAIGWYGFNVG), 250–270 (GLVCATTTMAMAGGGIGALIA), 273–293 (NDVLFTANGIVAGLVAICSGT), 295–315 (VVSPIGGLIIGLIAGLQVPIV), 339–359 (VIGAILTGILGLKIFGGAGGV), and 365–385 (IIGAVFCIIYGTGLGYILAKI).

Belongs to the ammonia transporter channel (TC 1.A.11.2) family. In terms of assembly, homotrimer. Interacts and forms a complex with GlnK2.

The protein localises to the cell membrane. Involved in the uptake of ammonium/ammonia (NH(4)(+)/NH(3)). Transport is electrogenic. The chain is Ammonium transporter Amt2 from Methanocaldococcus jannaschii (strain ATCC 43067 / DSM 2661 / JAL-1 / JCM 10045 / NBRC 100440) (Methanococcus jannaschii).